Here is a 479-residue protein sequence, read N- to C-terminus: Anaerobic nitric oxide reductase flavorubredoxin (479 aa).

Positions 30-210 (LRGSSYNSYL…PFSRLVTPKI (181 aa)) are zinc metallo-hydrolase. Residues His79, Glu81, Asp83, His147, Asp166, and His227 each contribute to the Fe cation site. A Flavodoxin-like domain is found at 254–393 (ITIFYDTMSN…LCREHGREIA (140 aa)). Residues 260 to 264 (TMSNN) and 342 to 369 (AFGS…EMSL) each bind FMN. Residues 423–474 (GPRMQCSVCQWIYDPAKGEPMQDVAPGTPWSEVPDNFLCPECSLGKDVFDEL) enclose the Rubredoxin-like domain. Positions 428, 431, 461, and 464 each coordinate Fe cation.

In the N-terminal section; belongs to the zinc metallo-hydrolase group 3 family. In terms of assembly, homotetramer. The cofactor is Fe cation. FMN serves as cofactor.

The protein resides in the cytoplasm. It functions in the pathway nitrogen metabolism; nitric oxide reduction. Its function is as follows. Anaerobic nitric oxide reductase; uses NADH to detoxify nitric oxide (NO), protecting several 4Fe-4S NO-sensitive enzymes. Has at least 2 reductase partners, only one of which (NorW, flavorubredoxin reductase) has been identified. NO probably binds to the di-iron center; electrons enter from the NorW at rubredoxin and are transferred sequentially to the FMN center and the di-iron center. Also able to function as an aerobic oxygen reductase. This Escherichia coli O6:H1 (strain CFT073 / ATCC 700928 / UPEC) protein is Anaerobic nitric oxide reductase flavorubredoxin.